Reading from the N-terminus, the 286-residue chain is General stress protein A (286 aa).

Residues 12 to 17 (CADDNY) and 111 to 112 (DC) each bind UDP. Mn(2+)-binding residues include Asp111, Asp113, and His247. Residue 247-253 (HFCGGEK) coordinates UDP.

It belongs to the glycosyltransferase 8 family.

In Bacillus subtilis (strain 168), this protein is General stress protein A (gspA).